The sequence spans 418 residues: MIFDKDDFKAYDADLWNAIAKEEERQQNNIELIASENVVSKAVMAAQGSILTNKYAEGYPGRRYYGGTDVVDVVETLAIERAKEIFGAKFANVQPHSGSQANCAAYMSLIEPGDTVMGMDLASGGHLTHGAPVSFSGQTYNFVSYSVDPKTELLDFDAILKQAQEVKPKLIVAGASAYSQIIDFSKFREIADAVGAKLMVDMAHIAGLVAAGLHPSPVPYAHITTTTTHKTLRGPRGGLILTNDEELAKKINSAIFPGIQGGPLEHVVAAKAVSFKEVLDPAFKEYAANVIKNSKAMADVFLQDPDFRIISGGTENHLFLVDVTKVVENGKVAQNLLDEVNITLNKNSIPYESLSPFKTSGIRIGAAAITARGFGEEESRKVAELIIKTLKNSENEAVLEEVRSAVKELTDAFPLYED.

Residues Leu121 and 125–127 (GHL) each bind (6S)-5,6,7,8-tetrahydrofolate. The residue at position 230 (Lys230) is an N6-(pyridoxal phosphate)lysine. (6S)-5,6,7,8-tetrahydrofolate contacts are provided by residues Glu246 and 355-357 (SPF).

Belongs to the SHMT family. In terms of assembly, homodimer. Pyridoxal 5'-phosphate serves as cofactor.

It localises to the cytoplasm. The catalysed reaction is (6R)-5,10-methylene-5,6,7,8-tetrahydrofolate + glycine + H2O = (6S)-5,6,7,8-tetrahydrofolate + L-serine. It functions in the pathway one-carbon metabolism; tetrahydrofolate interconversion. The protein operates within amino-acid biosynthesis; glycine biosynthesis; glycine from L-serine: step 1/1. Catalyzes the reversible interconversion of serine and glycine with tetrahydrofolate (THF) serving as the one-carbon carrier. This reaction serves as the major source of one-carbon groups required for the biosynthesis of purines, thymidylate, methionine, and other important biomolecules. Also exhibits THF-independent aldolase activity toward beta-hydroxyamino acids, producing glycine and aldehydes, via a retro-aldol mechanism. In Streptococcus pneumoniae serotype 4 (strain ATCC BAA-334 / TIGR4), this protein is Serine hydroxymethyltransferase.